Consider the following 330-residue polypeptide: Aspartate--ammonia ligase (330 aa).

This sequence belongs to the class-II aminoacyl-tRNA synthetase family. AsnA subfamily.

The protein resides in the cytoplasm. The enzyme catalyses L-aspartate + NH4(+) + ATP = L-asparagine + AMP + diphosphate + H(+). It participates in amino-acid biosynthesis; L-asparagine biosynthesis; L-asparagine from L-aspartate (ammonia route): step 1/1. The sequence is that of Aspartate--ammonia ligase from Salmonella paratyphi A (strain ATCC 9150 / SARB42).